A 319-amino-acid chain; its full sequence is MKRIGVLTSGGDSPGMNAAIRAVVRKAIFHDIEVYGIYHGYAGLISGHIEKLELGSVGDIIHRGGTKLYTARCPEFKDPEVRLKGIEQLKKHGIEGLVVIGGDGSYQGAKKLTEQGFPCVGVPGTIDNDIPGTDFTIGFDTALNTVIDAIDKIRDTATSHERTYVIEVMGRHAGDIALWAGLADGAETILIPEEEYDMEDVIARLKRGSERGKKHSIIVVAEGVGSAIDIGKHIEEATNFDTRVTVLGHVQRGGSPSAQDRVLASRLGARAVELLIAGKGGRCVGIQDNKLVDHDIIEALAQKHTIDKDMYQLSKELSI.

Gly-11 serves as a coordination point for ATP. Arg-21–Arg-25 serves as a coordination point for ADP. Residues Arg-72–Cys-73 and Gly-102–Ser-105 contribute to the ATP site. Residue Asp-103 coordinates Mg(2+). Substrate is bound at residue Thr-125–Asp-127. The active-site Proton acceptor is the Asp-127. Arg-154 lines the ADP pocket. Residues Arg-162 and Met-169–Arg-171 each bind substrate. ADP contacts are provided by residues Gly-185–Glu-187, Arg-211, and Lys-213–His-215. Residues Glu-222, Arg-243, and His-249–Arg-252 each bind substrate.

Belongs to the phosphofructokinase type A (PFKA) family. ATP-dependent PFK group I subfamily. Prokaryotic clade 'B1' sub-subfamily. Homotetramer. Mg(2+) serves as cofactor.

It localises to the cytoplasm. The enzyme catalyses beta-D-fructose 6-phosphate + ATP = beta-D-fructose 1,6-bisphosphate + ADP + H(+). It functions in the pathway carbohydrate degradation; glycolysis; D-glyceraldehyde 3-phosphate and glycerone phosphate from D-glucose: step 3/4. Allosterically activated by ADP and other diphosphonucleosides, and allosterically inhibited by phosphoenolpyruvate. Its function is as follows. Catalyzes the phosphorylation of D-fructose 6-phosphate to fructose 1,6-bisphosphate by ATP, the first committing step of glycolysis. The protein is ATP-dependent 6-phosphofructokinase of Bacillus anthracis (strain A0248).